Reading from the N-terminus, the 470-residue chain is Neuraminidase (470 aa).

The Intravirion portion of the chain corresponds to 1 to 6 (MNPNQK). Residues 7 to 27 (IITIGSISIAIGIISLMLQIG) traverse the membrane as a helical segment. The interval 11 to 33 (GSISIAIGIISLMLQIGNIISIW) is involved in apical transport and lipid raft association. Topologically, residues 28–470 (NIISIWASHS…GAELPFTIDK (443 aa)) are virion surface. Positions 36-90 (HSIQTGSQNHTGICNQRIITYENSTWVNHTYVNINNTNVVAGKDKTSVTLAGNSS) are hypervariable stalk region. Asn-44, Asn-58, Asn-63, Asn-70, and Asn-88 each carry an N-linked (GlcNAc...) asparagine; by host glycan. Residues 91–470 (LCSISGWAIY…GAELPFTIDK (380 aa)) are head of neuraminidase. 8 disulfides stabilise this stretch: Cys-92–Cys-417, Cys-124–Cys-129, Cys-184–Cys-231, Cys-233–Cys-238, Cys-279–Cys-292, Cys-281–Cys-290, Cys-318–Cys-335, and Cys-421–Cys-447. Arg-118 provides a ligand contact to substrate. A glycan (N-linked (GlcNAc...) asparagine; by host) is linked at Asn-146. Asp-151 acts as the Proton donor/acceptor in catalysis. Arg-152 serves as a coordination point for substrate. Residue Asn-235 is glycosylated (N-linked (GlcNAc...) asparagine; by host). 277-278 (EE) provides a ligand contact to substrate. Residue Arg-293 participates in substrate binding. Asp-294, Gly-298, and Asp-324 together coordinate Ca(2+). A substrate-binding site is contributed by Arg-368. Tyr-402 (nucleophile) is an active-site residue. Asn-434 and Asn-455 each carry an N-linked (GlcNAc...) asparagine; by host glycan.

It belongs to the glycosyl hydrolase 34 family. As to quaternary structure, homotetramer. Ca(2+) serves as cofactor. N-glycosylated.

It localises to the virion membrane. The protein localises to the host apical cell membrane. The enzyme catalyses Hydrolysis of alpha-(2-&gt;3)-, alpha-(2-&gt;6)-, alpha-(2-&gt;8)- glycosidic linkages of terminal sialic acid residues in oligosaccharides, glycoproteins, glycolipids, colominic acid and synthetic substrates.. With respect to regulation, inhibited by the neuraminidase inhibitors zanamivir (Relenza) and oseltamivir (Tamiflu). These drugs interfere with the release of progeny virus from infected cells and are effective against all influenza strains. Resistance to neuraminidase inhibitors is quite rare. In terms of biological role, catalyzes the removal of terminal sialic acid residues from viral and cellular glycoconjugates. Cleaves off the terminal sialic acids on the glycosylated HA during virus budding to facilitate virus release. Additionally helps virus spread through the circulation by further removing sialic acids from the cell surface. These cleavages prevent self-aggregation and ensure the efficient spread of the progeny virus from cell to cell. Otherwise, infection would be limited to one round of replication. Described as a receptor-destroying enzyme because it cleaves a terminal sialic acid from the cellular receptors. May facilitate viral invasion of the upper airways by cleaving the sialic acid moieties on the mucin of the airway epithelial cells. Likely to plays a role in the budding process through its association with lipid rafts during intracellular transport. May additionally display a raft-association independent effect on budding. Plays a role in the determination of host range restriction on replication and virulence. Sialidase activity in late endosome/lysosome traffic seems to enhance virus replication. This is Neuraminidase from Aves (Human).